The sequence spans 236 residues: 2-C-methyl-D-erythritol 4-phosphate cytidylyltransferase (236 aa).

The protein belongs to the IspD/TarI cytidylyltransferase family. IspD subfamily. In terms of assembly, homodimer.

The enzyme catalyses 2-C-methyl-D-erythritol 4-phosphate + CTP + H(+) = 4-CDP-2-C-methyl-D-erythritol + diphosphate. The protein operates within isoprenoid biosynthesis; isopentenyl diphosphate biosynthesis via DXP pathway; isopentenyl diphosphate from 1-deoxy-D-xylulose 5-phosphate: step 2/6. Its function is as follows. Catalyzes the formation of 4-diphosphocytidyl-2-C-methyl-D-erythritol from CTP and 2-C-methyl-D-erythritol 4-phosphate (MEP). The chain is 2-C-methyl-D-erythritol 4-phosphate cytidylyltransferase from Buchnera aphidicola subsp. Schizaphis graminum (strain Sg).